Here is a 258-residue protein sequence, read N- to C-terminus: SLA class II histocompatibility antigen, DQ haplotype D beta chain (258 aa).

The N-terminal stretch at 1–31 (MVALRLPRGLWTAALTVMLVVLGAPVAEGRD) is a signal peptide. The segment at 32-123 (SPQDFVVQFK…IEEGTTLQRR (92 aa)) is beta-1. Over 32 to 227 (SPQDFVVQFK…RAQSESAQSK (196 aa)) the chain is Extracellular. 2 disulfides stabilise this stretch: Cys-44/Cys-108 and Cys-146/Cys-202. N-linked (GlcNAc...) asparagine glycosylation occurs at Asn-48. Residues 124 to 217 (VQPTVTISPS…SLQSPILVEW (94 aa)) form a beta-2 region. The region spanning 126 to 230 (PTVTISPSKA…SESAQSKMLS (105 aa)) is the Ig-like C1-type domain. Residues 218-227 (RAQSESAQSK) form a connecting peptide region. The helical transmembrane segment at 228–248 (MLSGVGGFVLGLIFLGLGLFI) threads the bilayer. Residues 249 to 258 (RHRSQKGLVR) are Cytoplasmic-facing.

This sequence belongs to the MHC class II family.

The protein localises to the membrane. The polypeptide is SLA class II histocompatibility antigen, DQ haplotype D beta chain (Sus scrofa (Pig)).